The chain runs to 398 residues: Probable transcription factor PosF21 (398 aa).

2 disordered regions span residues 1 to 46 and 112 to 150; these read MDKE…HDIS and ATSSAQVGEPSGTAWKNETMMQTGTGSTSNPQNTVNSLG. Pro residues predominate over residues 7-19; the sequence is PAPPCGGLPPPSP. Residues 125 to 148 are compositionally biased toward polar residues; the sequence is AWKNETMMQTGTGSTSNPQNTVNS. Positions 201–264 constitute a bZIP domain; it reads DPKRAKRIWA…NGLTVENNEL (64 aa). The basic motif stretch occupies residues 203 to 224; it reads KRAKRIWANRQSAARSKERKTR. A leucine-zipper region spans residues 229 to 264; that stretch reads LERKVQTLQTEATTLSAQLTLLQRDTNGLTVENNEL.

This sequence belongs to the bZIP family.

Its subcellular location is the nucleus. Functionally, putative transcription factor with an activatory role. The chain is Probable transcription factor PosF21 (POSF21) from Arabidopsis thaliana (Mouse-ear cress).